The primary structure comprises 454 residues: UPF0210 protein Memar_2269 (454 aa).

It belongs to the UPF0210 family.

The sequence is that of UPF0210 protein Memar_2269 from Methanoculleus marisnigri (strain ATCC 35101 / DSM 1498 / JR1).